Here is a 1181-residue protein sequence, read N- to C-terminus: Pesticidal crystal protein Cry1Ae (1181 aa).

It belongs to the delta endotoxin family.

In terms of biological role, promotes colloidosmotic lysis by binding to the midgut epithelial cells of many lepidopteran larvae. The protein is Pesticidal crystal protein Cry1Ae (cry1Ae) of Bacillus thuringiensis subsp. alesti.